The following is an 86-amino-acid chain: Mitochondrial import inner membrane translocase subunit Tim10 (86 aa).

Residues 29–54 (CQAKCIATAFRESELTKGEAVCLDRC) carry the Twin CX3C motif motif. 2 disulfides stabilise this stretch: Cys29–Cys54 and Cys33–Cys50.

Belongs to the small Tim family. In terms of assembly, heterohexamer; composed of 3 copies of tim-9/tin-9.1 and 3 copies of tim-10/tin-10, named soluble 70 kDa complex. The complex associates with the tim-22 component of the TIM22 complex. Interacts with multi-pass transmembrane proteins in transit.

Its subcellular location is the mitochondrion inner membrane. Functionally, mitochondrial intermembrane chaperone that participates in the import and insertion of multi-pass transmembrane proteins into the mitochondrial inner membrane. May also be required for the transfer of beta-barrel precursors from the TOM complex to the sorting and assembly machinery (SAM complex) of the outer membrane. Acts as a chaperone-like protein that protects the hydrophobic precursors from aggregation and guide them through the mitochondrial intermembrane space. This Caenorhabditis elegans protein is Mitochondrial import inner membrane translocase subunit Tim10 (tin-10).